Here is a 383-residue protein sequence, read N- to C-terminus: Meiotic recombination protein SPO11-2 (383 aa).

Positions 24–167 (LLPHEARARI…LGIMASSRGL (144 aa)) constitute a Topo IIA-type catalytic domain. Y124 serves as the catalytic O-(5'-phospho-DNA)-tyrosine intermediate. Positions 217 and 270 each coordinate Mg(2+).

The protein belongs to the TOP6A family. Heterotetramer of 2 SPO11 (SPO11-1 and/or SPO11-2) and 2 MTOPVIB chains. Interacts with MTOPVIB. May form a heterodimer with SPO11-1. Interacts with PRD1. Does not interact with TOP6B. Requires Mg(2+) as cofactor. As to expression, very low expression in flowers and shoots.

The protein localises to the nucleus. The catalysed reaction is ATP-dependent breakage, passage and rejoining of double-stranded DNA.. Component of a topoisomerase 6 complex specifically required for meiotic recombination. Together with MTOPVIB, mediates DNA cleavage that forms the double-strand breaks (DSB) that initiate meiotic recombination. The complex promotes relaxation of negative and positive supercoiled DNA and DNA decatenation through cleavage and ligation cycles. This chain is Meiotic recombination protein SPO11-2 (SPO11-2), found in Arabidopsis thaliana (Mouse-ear cress).